The sequence spans 579 residues: Aspartate--tRNA(Asp/Asn) ligase (579 aa).

An L-aspartate-binding site is contributed by glutamate 169. An aspartate region spans residues 193 to 196; it reads QLFK. Arginine 215 is a binding site for L-aspartate. ATP contacts are provided by residues 215-217 and glutamine 224; that span reads RDE. L-aspartate is bound at residue histidine 437. Glutamate 471 serves as a coordination point for ATP. Arginine 478 contributes to the L-aspartate binding site. 523–526 serves as a coordination point for ATP; the sequence is GWDR. Residues 551 to 579 form a disordered region; it reads DPLTGAPTPITAEQRREAGVDAVPEQATS.

The protein belongs to the class-II aminoacyl-tRNA synthetase family. Type 1 subfamily. In terms of assembly, homodimer.

Its subcellular location is the cytoplasm. The catalysed reaction is tRNA(Asx) + L-aspartate + ATP = L-aspartyl-tRNA(Asx) + AMP + diphosphate. Aspartyl-tRNA synthetase with relaxed tRNA specificity since it is able to aspartylate not only its cognate tRNA(Asp) but also tRNA(Asn). Reaction proceeds in two steps: L-aspartate is first activated by ATP to form Asp-AMP and then transferred to the acceptor end of tRNA(Asp/Asn). The sequence is that of Aspartate--tRNA(Asp/Asn) ligase from Thermobifida fusca (strain YX).